The sequence spans 132 residues: Fatty acid-binding protein, brain (132 aa).

At Val2 the chain carries N-acetylvaline. Arg127–Tyr129 provides a ligand contact to a fatty acid.

The protein belongs to the calycin superfamily. Fatty-acid binding protein (FABP) family. As to quaternary structure, monomer.

It is found in the cytoplasm. In terms of biological role, FABPs are thought to play a role in the intracellular transport of long-chain fatty acids and their acyl-CoA esters. Binds oleic and palmitic acids but not palmitoyl CoA. This chain is Fatty acid-binding protein, brain (FABP7), found in Bos taurus (Bovine).